A 180-amino-acid polypeptide reads, in one-letter code: Large ribosomal subunit protein bL17 (180 aa).

Residues Ala-134 to Asn-180 form a disordered region.

This sequence belongs to the bacterial ribosomal protein bL17 family. As to quaternary structure, part of the 50S ribosomal subunit. Contacts protein L32.

This Mycobacterium tuberculosis (strain ATCC 25177 / H37Ra) protein is Large ribosomal subunit protein bL17.